The chain runs to 268 residues: Interleukin-2 receptor subunit alpha (268 aa).

The first 21 residues, 1 to 21 (MEPCLLMWGILTFITVSGYTT), serve as a signal peptide directing secretion. A Sushi 1 domain is found at 22–81 (DLCDDDPPNLKHATFKALTYKTGTVLNCDCERGFRRISSYMHCTGNSSHASWENKCRCKS). At 22–237 (DLCDDDPPNL…ESFIFTTEYQ (216 aa)) the chain is on the extracellular side. 3 disulfide bridges follow: Cys24/Cys64, Cys49/Cys77, and Cys51/Cys79. The N-linked (GlcNAc...) asparagine glycan is linked to Asn67. The tract at residues 83–112 (SPENRKGKVTTKPEEQKGENPTEMQSQTPP) is disordered. Residues 85-102 (ENRKGKVTTKPEEQKGEN) show a composition bias toward basic and acidic residues. The Sushi 2 domain maps to 120-183 (GHCREPPPWE…WTQPPLKCIS (64 aa)). 2 cysteine pairs are disulfide-bonded: Cys122–Cys165 and Cys149–Cys181. The segment at 186-213 (QFPDDEELQASTDAPAGRDTSSPFITTS) is disordered. Over residues 204-213 (DTSSPFITTS) the composition is skewed to polar residues. Residues 238-258 (IAVASCVLLLISIVLLSGLTW) traverse the membrane as a helical segment. At 259 to 268 (QRRRRKSRTI) the chain is on the cytoplasmic side.

In terms of assembly, non-covalent dimer of an alpha and a beta subunit. IL2R exists in 3 different forms: a high affinity dimer, an intermediate affinity monomer (beta subunit), and a low affinity monomer (alpha subunit). The high and intermediate affinity forms also associate with a gamma subunit.

It localises to the membrane. Receptor for interleukin-2. The receptor is involved in the regulation of immune tolerance by controlling regulatory T cells (TREGs) activity. TREGs suppress the activation and expansion of autoreactive T-cells. The chain is Interleukin-2 receptor subunit alpha (IL2RA) from Canis lupus familiaris (Dog).